A 738-amino-acid chain; its full sequence is Protein Aster-B (738 aa).

The tract at residues 1–81 (MKGFKLSCTA…SGGKNSKKSQ (81 aa)) is disordered. Positions 8–19 (CTASNSNRSTPA) are enriched in polar residues. Phosphoserine occurs at positions 28 and 30. A compositionally biased stretch (basic and acidic residues) spans 41–51 (MVEKGSDHSSD). Low complexity predominate over residues 59–70 (QGVQRSCSSQSG). One can recognise a GRAM domain in the interval 96 to 163 (EDFRKLFKQL…KDICSMTKEK (68 aa)). Residues 254-301 (EENEVNDSSSKSSIETKPDASPQLPKKSITNSTLTSTGSSEAPVSFDG) form a disordered region. A compositionally biased stretch (polar residues) spans 259-268 (NDSSSKSSIE). Serine 274 carries the phosphoserine modification. Residues 281–295 (SITNSTLTSTGSSEA) are compositionally biased toward polar residues. The 172-residue stretch at 372-543 (SGRQYVNEVF…ELAKTESTYL (172 aa)) folds into the VASt domain. The residue at position 389 (tyrosine 389) is a Phosphotyrosine. The disordered stretch occupies residues 544 to 566 (AEMHRQSPKEKASKTTTVRRRKR). The span at 545–556 (EMHRQSPKEKAS) shows a compositional bias: basic and acidic residues. Serine 550 and serine 581 each carry phosphoserine. Phosphothreonine occurs at positions 584, 585, and 587. The chain crosses the membrane as a helical span at residues 623 to 643 (LLLVISCVICFSLVLLVILNM).

It is found in the endoplasmic reticulum membrane. Its subcellular location is the cell membrane. In terms of biological role, cholesterol transporter that mediates non-vesicular transport of cholesterol from the plasma membrane (PM) to the endoplasmic reticulum (ER). Contains unique domains for binding cholesterol and the PM, thereby serving as a molecular bridge for the transfer of cholesterol from the PM to the ER. Plays a crucial role in cholesterol homeostasis in the adrenal gland and has the unique ability to localize to the PM based on the level of membrane cholesterol. In lipid-poor conditions localizes to the ER membrane and in response to excess cholesterol in the PM is recruited to the endoplasmic reticulum-plasma membrane contact sites (EPCS) which is mediated by the GRAM domain. At the EPCS, the sterol-binding VASt/ASTER domain binds to the cholesterol in the PM and facilitates its transfer from the PM to ER. The chain is Protein Aster-B (GRAMD1B) from Homo sapiens (Human).